The chain runs to 450 residues: Glycerol dehydrogenase 1 (450 aa).

Residues D99, 155–159 (GKTMD), and 177–180 (TTAS) each bind NAD(+). D182 contributes to the substrate binding site. Positions 186, 188, and 192 each coordinate NAD(+). Substrate-binding residues include D232, H315, and H333. Residues D232, H315, and H333 each coordinate Zn(2+).

This sequence belongs to the iron-containing alcohol dehydrogenase family. Zn(2+) is required as a cofactor.

It is found in the mitochondrion. It carries out the reaction glycerol + NAD(+) = dihydroxyacetone + NADH + H(+). The protein operates within polyol metabolism; glycerol fermentation; glycerone phosphate from glycerol (oxidative route): step 1/2. Its function is as follows. Glycerol dehydrogenase involved in the assimilation of glycerol. This Schizosaccharomyces pombe (strain 972 / ATCC 24843) (Fission yeast) protein is Glycerol dehydrogenase 1 (gld1).